A 201-amino-acid polypeptide reads, in one-letter code: Small ribosomal subunit protein uS4 (201 aa).

The tract at residues 22–47 (TGKELARRPYAPGDHGNDRRGKLSEY) is disordered. Residues 93-153 (RRLDNMVYRL…EKSKNLDVIK (61 aa)) form the S4 RNA-binding domain.

This sequence belongs to the universal ribosomal protein uS4 family. In terms of assembly, part of the 30S ribosomal subunit. Contacts protein S5. The interaction surface between S4 and S5 is involved in control of translational fidelity.

Its function is as follows. One of the primary rRNA binding proteins, it binds directly to 16S rRNA where it nucleates assembly of the body of the 30S subunit. In terms of biological role, with S5 and S12 plays an important role in translational accuracy. This is Small ribosomal subunit protein uS4 from Limosilactobacillus fermentum (strain NBRC 3956 / LMG 18251) (Lactobacillus fermentum).